The following is a 290-amino-acid chain: Fat storage-inducing transmembrane protein 1 (290 aa).

5 helical membrane passes run 1-21, 26-46, 65-85, 173-193, and 205-225; these read MFLN…LGNT, HFHL…LWVS, SGWG…SFSV, LLLC…GPYL, and ILFL…LCLL.

This sequence belongs to the FIT family. FIT1 subfamily.

The protein localises to the endoplasmic reticulum membrane. Functionally, may play an important role in the formation of lipid droplets (LDs) which are storage organelles at the center of lipid and energy homeostasis. May directly bind to diacylglycerol (DAGs) and triacylglycerol. This chain is Fat storage-inducing transmembrane protein 1 (fitm1l), found in Danio rerio (Zebrafish).